The chain runs to 48 residues: MAVPKRRVSKTRAAKRRTHYKVSLPMPVKDKDGSYKMPHRANPTTKEY.

Positions 1-20 (MAVPKRRVSKTRAAKRRTHY) are enriched in basic residues. Residues 1–48 (MAVPKRRVSKTRAAKRRTHYKVSLPMPVKDKDGSYKMPHRANPTTKEY) are disordered.

Belongs to the bacterial ribosomal protein bL32 family.

The chain is Large ribosomal subunit protein bL32 from Campylobacter jejuni subsp. doylei (strain ATCC BAA-1458 / RM4099 / 269.97).